The following is a 148-amino-acid chain: Putative cyclin-dependent kinase inhibitor SPL2 (148 aa).

Phosphoserine occurs at positions 59 and 86.

Its subcellular location is the cytoplasmic granule. It is found in the cytoplasm. Its function is as follows. Putative cyclin-dependent kinase (CDK) inhibitor necessary and sufficient for PHO pathway-dependent down-regulation of low-affinity phosphate transport. This chain is Putative cyclin-dependent kinase inhibitor SPL2 (SPL2), found in Saccharomyces cerevisiae (strain ATCC 204508 / S288c) (Baker's yeast).